A 231-amino-acid chain; its full sequence is 7-cyano-7-deazaguanine synthase (231 aa).

ATP is bound at residue 8–18; the sequence is FSGGQDSTTCL. Zn(2+)-binding residues include C188, C197, C200, and C203.

Belongs to the QueC family. The cofactor is Zn(2+).

It catalyses the reaction 7-carboxy-7-deazaguanine + NH4(+) + ATP = 7-cyano-7-deazaguanine + ADP + phosphate + H2O + H(+). It functions in the pathway purine metabolism; 7-cyano-7-deazaguanine biosynthesis. In terms of biological role, catalyzes the ATP-dependent conversion of 7-carboxy-7-deazaguanine (CDG) to 7-cyano-7-deazaguanine (preQ(0)). This Cronobacter sakazakii (strain ATCC BAA-894) (Enterobacter sakazakii) protein is 7-cyano-7-deazaguanine synthase.